A 129-amino-acid chain; its full sequence is Small ribosomal subunit protein eS6 (129 aa).

Positions 106 to 129 (QINASIVSRGEQSIDDLLGGEDDE) are disordered.

This sequence belongs to the eukaryotic ribosomal protein eS6 family.

This chain is Small ribosomal subunit protein eS6, found in Natronomonas pharaonis (strain ATCC 35678 / DSM 2160 / CIP 103997 / JCM 8858 / NBRC 14720 / NCIMB 2260 / Gabara) (Halobacterium pharaonis).